The primary structure comprises 407 residues: Carbamoyl phosphate synthase small chain (407 aa).

The segment at 1-205 is CPSase; the sequence is MTETTPKTAP…LQDGYGEQDA (205 aa). 3 residues coordinate L-glutamine: Ser-60, Gly-257, and Gly-259. The Glutamine amidotransferase type-1 domain occupies 209 to 397; the sequence is HVVALDFGVK…INLIRERKGQ (189 aa). Cys-286 functions as the Nucleophile in the catalytic mechanism. L-glutamine-binding residues include Leu-287, Gln-290, Asn-328, Gly-330, and Phe-331. Residues His-370 and Glu-372 contribute to the active site.

Belongs to the CarA family. Composed of two chains; the small (or glutamine) chain promotes the hydrolysis of glutamine to ammonia, which is used by the large (or ammonia) chain to synthesize carbamoyl phosphate. Tetramer of heterodimers (alpha,beta)4.

The catalysed reaction is hydrogencarbonate + L-glutamine + 2 ATP + H2O = carbamoyl phosphate + L-glutamate + 2 ADP + phosphate + 2 H(+). It carries out the reaction L-glutamine + H2O = L-glutamate + NH4(+). The protein operates within amino-acid biosynthesis; L-arginine biosynthesis; carbamoyl phosphate from bicarbonate: step 1/1. It participates in pyrimidine metabolism; UMP biosynthesis via de novo pathway; (S)-dihydroorotate from bicarbonate: step 1/3. Functionally, small subunit of the glutamine-dependent carbamoyl phosphate synthetase (CPSase). CPSase catalyzes the formation of carbamoyl phosphate from the ammonia moiety of glutamine, carbonate, and phosphate donated by ATP, constituting the first step of 2 biosynthetic pathways, one leading to arginine and/or urea and the other to pyrimidine nucleotides. The small subunit (glutamine amidotransferase) binds and cleaves glutamine to supply the large subunit with the substrate ammonia. This chain is Carbamoyl phosphate synthase small chain, found in Brucella abortus (strain S19).